The primary structure comprises 67 residues: MMSDATIVNCPTCGKEVIWGEKSPFRPFCSKRCQLIDLGEWAAEEKRIPSSGDRSDTDGWSEEENQP.

Residues cysteine 10, cysteine 13, cysteine 29, and cysteine 33 each coordinate Zn(2+). Basic and acidic residues predominate over residues 44–57 (EEKRIPSSGDRSDT). The segment at 44–67 (EEKRIPSSGDRSDTDGWSEEENQP) is disordered.

It belongs to the DNA gyrase inhibitor YacG family. In terms of assembly, interacts with GyrB. Zn(2+) serves as cofactor.

Inhibits all the catalytic activities of DNA gyrase by preventing its interaction with DNA. Acts by binding directly to the C-terminal domain of GyrB, which probably disrupts DNA binding by the gyrase. This chain is DNA gyrase inhibitor YacG, found in Cronobacter sakazakii (strain ATCC BAA-894) (Enterobacter sakazakii).